Reading from the N-terminus, the 861-residue chain is Integrator complex subunit 6-like (861 aa).

Residues 3–227 (ILLFLIDTSA…QCLESLVQKV (225 aa)) enclose the VWFA domain. A disordered region spans residues 605 to 626 (PQNKVKRPGEPNSPMSSKRRRS). Serine 617 is modified (phosphoserine).

The chain is Integrator complex subunit 6-like (INTS6L) from Homo sapiens (Human).